A 418-amino-acid chain; its full sequence is NADH-quinone oxidoreductase subunit D (418 aa).

It belongs to the complex I 49 kDa subunit family. As to quaternary structure, NDH-1 is composed of 14 different subunits. Subunits NuoB, C, D, E, F, and G constitute the peripheral sector of the complex.

Its subcellular location is the cell inner membrane. It carries out the reaction a quinone + NADH + 5 H(+)(in) = a quinol + NAD(+) + 4 H(+)(out). In terms of biological role, NDH-1 shuttles electrons from NADH, via FMN and iron-sulfur (Fe-S) centers, to quinones in the respiratory chain. The immediate electron acceptor for the enzyme in this species is believed to be ubiquinone. Couples the redox reaction to proton translocation (for every two electrons transferred, four hydrogen ions are translocated across the cytoplasmic membrane), and thus conserves the redox energy in a proton gradient. This chain is NADH-quinone oxidoreductase subunit D, found in Bordetella bronchiseptica (strain ATCC BAA-588 / NCTC 13252 / RB50) (Alcaligenes bronchisepticus).